The following is a 158-amino-acid chain: Cytochrome b562 (158 aa).

4 helical membrane passes run 12–32 (ITLH…GETM), 46–66 (AGVG…LTLV), 87–107 (VAAG…ALGM), and 121–141 (HVLA…SALF). Positions 15 and 53 each coordinate heme b. His121 and His135 together coordinate heme b.

It belongs to the cytochrome b561 family. As to quaternary structure, homodimer. It depends on heme b as a cofactor.

It localises to the cell membrane. Functionally, cytochrome b562 is an integral component of the cytochrome b-c1 complex in the cyclic electron transfer system of photosynthetic bacteria. The protein is Cytochrome b562 of Cereibacter sphaeroides (strain ATCC 17023 / DSM 158 / JCM 6121 / CCUG 31486 / LMG 2827 / NBRC 12203 / NCIMB 8253 / ATH 2.4.1.) (Rhodobacter sphaeroides).